Here is a 43-residue protein sequence, read N- to C-terminus: Protein PsbN (43 aa).

A helical membrane pass occupies residues 5–27 (TLVAISISRLLVSFTGYALYTAF).

The protein belongs to the PsbN family.

It is found in the plastid. The protein resides in the chloroplast thylakoid membrane. In terms of biological role, may play a role in photosystem I and II biogenesis. The protein is Protein PsbN of Cycas taitungensis (Prince sago).